A 293-amino-acid polypeptide reads, in one-letter code: Kallikrein-5 (293 aa).

The first 22 residues, 1–22, serve as a signal peptide directing secretion; the sequence is MATARPPWMWVLCALITALLLG. Polar residues predominate over residues 37 to 49; the sequence is HPSNTVPSGSNQD. The interval 37–68 is disordered; it reads HPSNTVPSGSNQDLGAGAGEDARSDDSSSRII. In terms of domain architecture, Peptidase S1 spans 67 to 290; that stretch reads IINGSDCDMH…FTKWIQETIQ (224 aa). A glycan (N-linked (GlcNAc...) asparagine) is linked at N69. 6 disulfides stabilise this stretch: C73–C206, C93–C109, C178–C279, C185–C251, C217–C231, and C241–C266. Residues H108 and D153 each act as charge relay system in the active site. Residues N173 and N208 are each glycosylated (N-linked (GlcNAc...) asparagine). S245 (charge relay system) is an active-site residue. An N-linked (GlcNAc...) asparagine glycan is attached at N252.

Belongs to the peptidase S1 family. Kallikrein subfamily. As to quaternary structure, interacts with SPINK9. Expressed in skin, breast, brain and testis. Expressed at the stratum granulosum of palmar skin.

The protein localises to the secreted. Its activity is regulated as follows. Inhibited by Zn2+. Functionally, may be involved in desquamation. In Homo sapiens (Human), this protein is Kallikrein-5.